Consider the following 441-residue polypeptide: Polyketide methyltransferase ustM (441 aa).

Residues 266 to 368 form a methyltransferase (CMeT) domain region; the sequence is LEVGAGLGGT…VRKLLRGGGF (103 aa).

The protein belongs to the methyltransferase superfamily.

It participates in secondary metabolite biosynthesis. Its function is as follows. Polyketide methyltransferase; part of the gene cluster that mediates the biosynthesis of ustilaginoidins, dimeric gamma-naphthopyrones isolated from different fungal species. The first step in the biosynthesis of ustilaginoidins is the production of gamma-naphthopyrone precursor YWA1 by the non-reducing polyketide synthase ustP, via condensation of one acetyl-CoA starter unit with 6 malonyl-CoA units. YWA1 is then probably substrate of the ustZ to yield norrubrofusarin via a dehydration reaction. A key enzyme in the biosynthetic pathway is the laccase ustL, which catalyzes the oxidative dimerization of norrubrofusarin to ustilaginoidin A. It can produce the M- and P-atropisomers in varying amounts, depending on the reaction conditions. For the biosynthesis of 3-methylustilaginoid in derivatives such as chaetochromin A, a methylated derivative of YWA1 is required. The C-methylation is considered to be catalyzed by ustM, the phosphopantetheine attachment site of which indicates that it acts on the growing polyketide chain before release of the product. For the biosynthesis of chaetochromin A, it is assumed that saturation of the D2 double bond takes place before dimerization, and is probably catalyzed by an external reductase because no candidate gene was identified within the cluster. The protein is Polyketide methyltransferase ustM of Ustilaginoidea virens (Rice false smut fungus).